The following is a 190-amino-acid chain: Segregation and condensation protein B (190 aa).

Belongs to the ScpB family. In terms of assembly, homodimer. Homodimerization may be required to stabilize the binding of ScpA to the Smc head domains. Component of a cohesin-like complex composed of ScpA, ScpB and the Smc homodimer, in which ScpA and ScpB bind to the head domain of Smc. The presence of the three proteins is required for the association of the complex with DNA.

It is found in the cytoplasm. In terms of biological role, participates in chromosomal partition during cell division. May act via the formation of a condensin-like complex containing Smc and ScpA that pull DNA away from mid-cell into both cell halves. This Bacillus cereus (strain G9842) protein is Segregation and condensation protein B.